A 513-amino-acid polypeptide reads, in one-letter code: MEISWGRALWRNFLGQSPDWYKLALIIFLIVNPLIFLISPFVAGWLLVAEFIFTLAMALKCYPLLPGGLLAIEAVFIGMTSAEHVREEVAANLEVLLLLMFMVAGIYFMKQLLLFIFTRLLLSIRSKMLLSLSFCVAAAFLSAFLDALTVVAVVISVAVGFYGIYHRVASSRTEDTDLQDDSHIDKHYKVVLEQFRGFLRSLMMHAGVGTALGGVMTMVGEPQNLIIAKAAGWHFGDFFLRMSPVTVPVLICGLLTCLLVEKLRWFGYGETLPEKVREVLQQFDDQSRHQRTRQDKIRLIVQAIIGVWLVTALALHLAEVGLIGLSVIILATSLTGVTDEHAIGKAFTESLPFTALLTVFFSVVAVIIDQQLFSPIIQFVLQASEHAQLSLFYIFNGLLSSISDNVFVGTIYINEAKAAMESGAITLKQYELQAVAINTGTNLPSVATPNGQAAFLFLLTSALAPLIRLSYGRMVWMALPYTLVLTLVGLLCVEFTLAPVTEWFMQMGWIATL.

Helical transmembrane passes span 23-43 (LALIIFLIVNPLIFLISPFVA), 52-72 (IFTLAMALKCYPLLPGGLLAI), 97-117 (LLLMFMVAGIYFMKQLLLFIF), 120-140 (LLLSIRSKMLLSLSFCVAAAF), 144-164 (FLDALTVVAVVISVAVGFYGI), 202-222 (LMMHAGVGTALGGVMTMVGEP), 238-258 (FFLRMSPVTVPVLICGLLTCL), 303-323 (AIIGVWLVTALALHLAEVGLI), 348-368 (TESLPFTALLTVFFSVVAVII), 391-411 (LFYIFNGLLSSISDNVFVGTI), 447-467 (ATPNGQAAFLFLLTSALAPLI), and 475-495 (VWMALPYTLVLTLVGLLCVEF).

Belongs to the NhaB Na(+)/H(+) (TC 2.A.34) antiporter family.

Its subcellular location is the cell inner membrane. The catalysed reaction is 2 Na(+)(in) + 3 H(+)(out) = 2 Na(+)(out) + 3 H(+)(in). Na(+)/H(+) antiporter that extrudes sodium in exchange for external protons. The sequence is that of Na(+)/H(+) antiporter NhaB from Escherichia coli (strain 55989 / EAEC).